A 522-amino-acid chain; its full sequence is Putative glucosylceramidase 3 (522 aa).

Residues 1–21 (MSRWKVVILCLLSFMFEIGHA) form the signal peptide. The active-site Proton donor is Glu-259. The active-site Nucleophile is the Glu-364.

The protein belongs to the glycosyl hydrolase 30 family.

It catalyses the reaction a beta-D-glucosylceramide + H2O = an N-acyl-sphingoid base + D-glucose. The enzyme catalyses a beta-D-glucosyl-(1&lt;-&gt;1')-N-acylsphing-4-enine + H2O = an N-acylsphing-4-enine + D-glucose. It carries out the reaction an N-acyl-1-beta-D-glucosyl-15-methylhexadecasphing-4-enine + H2O = an N-acyl-15-methylhexadecasphing-4-enine + D-glucose. The protein operates within lipid metabolism; sphingolipid metabolism. Functionally, glucosylceramidase that catalyzes the hydrolysis of glucosylceramides into free ceramides and glucose. C.elegans contain specific sphingoid bases, which are unique or different in structure compared to the sphingoid bases found in other animals. Two examples of these distinctive compounds are: 15-methylhexadecasphinganine and 15-methylhexadecasphing-4-enine. This is Putative glucosylceramidase 3 from Caenorhabditis elegans.